The primary structure comprises 546 residues: Chaperonin GroEL 2 (546 aa).

Residues 30 to 33 (TLGP), lysine 51, 87 to 91 (DGTTT), glycine 415, and aspartate 496 contribute to the ATP site.

Belongs to the chaperonin (HSP60) family. As to quaternary structure, forms a cylinder of 14 subunits composed of two heptameric rings stacked back-to-back. Interacts with the co-chaperonin GroES.

Its subcellular location is the cytoplasm. The catalysed reaction is ATP + H2O + a folded polypeptide = ADP + phosphate + an unfolded polypeptide.. Functionally, together with its co-chaperonin GroES, plays an essential role in assisting protein folding. The GroEL-GroES system forms a nano-cage that allows encapsulation of the non-native substrate proteins and provides a physical environment optimized to promote and accelerate protein folding. The polypeptide is Chaperonin GroEL 2 (Bradyrhizobium sp. (strain ORS 278)).